The sequence spans 176 residues: Late lactation protein (176 aa).

The signal sequence occupies residues 1–18; the sequence is MKVLFFTIALSLFSILHA. A disulfide bond links Cys-78 and Cys-171.

This sequence belongs to the calycin superfamily. Lipocalin family. As to expression, mammary gland. Secreted in milk.

The protein localises to the secreted. Its function is as follows. Probably serves a role in the transport of a small ligand released during the hydrolysis of milk fat. In Trichosurus vulpecula (Brush-tailed possum), this protein is Late lactation protein.